Here is a 195-residue protein sequence, read N- to C-terminus: HTH-type transcriptional regulator TtmR (195 aa).

Positions 47–177 (DSQLCFAVYA…LLDNLASMRD (131 aa)) constitute an HTH marR-type domain. A DNA-binding region (H-T-H motif) is located at residues 93-116 (VKEIGSRLFLDSGTLTPLLKRLEA).

It localises to the cytoplasm. Formaldehyde-responsive transcription factor that modulates resistance to stress induced by formaldehyde. Impacts the expression of a number of genes encoding transcription factors and/or involved in stress response, including efgA, and which probably collectively trigger a formaldehyde-specific physiological response. Required for optimal transition to methylotrophy. Not involved in a general stress response. The sequence is that of HTH-type transcriptional regulator TtmR from Methylorubrum extorquens (strain PA1) (Methylobacterium extorquens).